Here is a 504-residue protein sequence, read N- to C-terminus: Maturase K (504 aa).

This sequence belongs to the intron maturase 2 family. MatK subfamily.

It localises to the plastid. The protein localises to the chloroplast. Its function is as follows. Usually encoded in the trnK tRNA gene intron. Probably assists in splicing its own and other chloroplast group II introns. This Thlaspi arvense (Field penny-cress) protein is Maturase K.